Reading from the N-terminus, the 479-residue chain is tRNA-2-methylthio-N(6)-dimethylallyladenosine synthase (479 aa).

The 117-residue stretch at Lys-6–Ser-122 folds into the MTTase N-terminal domain. [4Fe-4S] cluster-binding residues include Cys-15, Cys-51, Cys-85, Cys-172, Cys-176, and Cys-179. The 233-residue stretch at Arg-158–Glu-390 folds into the Radical SAM core domain. Residues Gln-393–Thr-464 form the TRAM domain.

It belongs to the methylthiotransferase family. MiaB subfamily. In terms of assembly, monomer. It depends on [4Fe-4S] cluster as a cofactor.

Its subcellular location is the cytoplasm. The enzyme catalyses N(6)-dimethylallyladenosine(37) in tRNA + (sulfur carrier)-SH + AH2 + 2 S-adenosyl-L-methionine = 2-methylsulfanyl-N(6)-dimethylallyladenosine(37) in tRNA + (sulfur carrier)-H + 5'-deoxyadenosine + L-methionine + A + S-adenosyl-L-homocysteine + 2 H(+). In terms of biological role, catalyzes the methylthiolation of N6-(dimethylallyl)adenosine (i(6)A), leading to the formation of 2-methylthio-N6-(dimethylallyl)adenosine (ms(2)i(6)A) at position 37 in tRNAs that read codons beginning with uridine. This Rhodopirellula baltica (strain DSM 10527 / NCIMB 13988 / SH1) protein is tRNA-2-methylthio-N(6)-dimethylallyladenosine synthase.